A 555-amino-acid chain; its full sequence is Glutamine--tRNA ligase (555 aa).

Positions 34 to 44 (PEPNGFLHIGH) match the 'HIGH' region motif. Residues 35 to 37 (EPN) and 41 to 47 (HIGHAKS) each bind ATP. Positions 67 and 212 each coordinate L-glutamine. Residues Thr231, 261–262 (RL), and 269–271 (LSK) each bind ATP. Residues 268–272 (VLSKR) carry the 'KMSKS' region motif.

Belongs to the class-I aminoacyl-tRNA synthetase family. As to quaternary structure, monomer.

The protein localises to the cytoplasm. The enzyme catalyses tRNA(Gln) + L-glutamine + ATP = L-glutaminyl-tRNA(Gln) + AMP + diphosphate. This Alteromonas mediterranea (strain DSM 17117 / CIP 110805 / LMG 28347 / Deep ecotype) protein is Glutamine--tRNA ligase.